We begin with the raw amino-acid sequence, 135 residues long: Small ribosomal subunit protein uS12c (135 aa).

Belongs to the universal ribosomal protein uS12 family. Part of the 30S ribosomal subunit.

Its subcellular location is the plastid. The protein localises to the chloroplast. Functionally, with S4 and S5 plays an important role in translational accuracy. Located at the interface of the 30S and 50S subunits. This is Small ribosomal subunit protein uS12c (rps12) from Adiantum capillus-veneris (Maidenhair fern).